Here is a 132-residue protein sequence, read N- to C-terminus: Small ribosomal subunit protein uS8 (132 aa).

It belongs to the universal ribosomal protein uS8 family. Part of the 30S ribosomal subunit. Contacts proteins S5 and S12.

In terms of biological role, one of the primary rRNA binding proteins, it binds directly to 16S rRNA central domain where it helps coordinate assembly of the platform of the 30S subunit. This chain is Small ribosomal subunit protein uS8, found in Brucella abortus (strain S19).